The chain runs to 359 residues: Serpentine receptor class epsilon-13 (359 aa).

A run of 7 helical transmembrane segments spans residues 33-53 (YLFV…YYLL), 74-94 (AIYL…ILLI), 111-131 (ISLF…AFVA), 150-170 (WLVG…ALDF), 180-200 (VTIF…NFLL), 237-257 (LALS…IDNL), and 266-286 (LNTV…PFVI).

The protein belongs to the nematode receptor-like protein sre family.

The protein localises to the membrane. The chain is Serpentine receptor class epsilon-13 (sre-13) from Caenorhabditis elegans.